The chain runs to 104 residues: Complex III assembly factor LYRM7 (104 aa).

It belongs to the complex I LYR family. In terms of assembly, interacts with UQCRFS1.

It localises to the mitochondrion matrix. Its function is as follows. Assembly factor required for Rieske Fe-S protein UQCRFS1 incorporation into the cytochrome b-c1 (CIII) complex. Functions as a chaperone, binding to this subunit within the mitochondrial matrix and stabilizing it prior to its translocation and insertion into the late CIII dimeric intermediate within the mitochondrial inner membrane. In Danio rerio (Zebrafish), this protein is Complex III assembly factor LYRM7 (LYRM7).